The chain runs to 207 residues: Outer-membrane lipoprotein LolB (207 aa).

Positions 1–26 are cleaved as a signal peptide; it reads MSKLKIDTKRRFSLLIALVLIISLSS. Residue cysteine 27 is the site of N-palmitoyl cysteine attachment. Residue cysteine 27 is the site of S-diacylglycerol cysteine attachment.

This sequence belongs to the LolB family. As to quaternary structure, monomer.

Its subcellular location is the cell outer membrane. Plays a critical role in the incorporation of lipoproteins in the outer membrane after they are released by the LolA protein. The protein is Outer-membrane lipoprotein LolB of Francisella tularensis subsp. tularensis (strain WY96-3418).